The sequence spans 842 residues: DNA mismatch repair protein MutS (842 aa).

596–603 (GPNMSGKS) is an ATP binding site.

The protein belongs to the DNA mismatch repair MutS family.

In terms of biological role, this protein is involved in the repair of mismatches in DNA. It is possible that it carries out the mismatch recognition step. This protein has a weak ATPase activity. This chain is DNA mismatch repair protein MutS, found in Exiguobacterium sp. (strain ATCC BAA-1283 / AT1b).